Here is a 311-residue protein sequence, read N- to C-terminus: Methionyl-tRNA formyltransferase (311 aa).

110-113 (SLLP) contributes to the (6S)-5,6,7,8-tetrahydrofolate binding site.

Belongs to the Fmt family.

It catalyses the reaction L-methionyl-tRNA(fMet) + (6R)-10-formyltetrahydrofolate = N-formyl-L-methionyl-tRNA(fMet) + (6S)-5,6,7,8-tetrahydrofolate + H(+). Attaches a formyl group to the free amino group of methionyl-tRNA(fMet). The formyl group appears to play a dual role in the initiator identity of N-formylmethionyl-tRNA by promoting its recognition by IF2 and preventing the misappropriation of this tRNA by the elongation apparatus. This is Methionyl-tRNA formyltransferase from Streptococcus pyogenes serotype M3 (strain ATCC BAA-595 / MGAS315).